Consider the following 155-residue polypeptide: UPF0266 membrane protein LMHCC_1856 (155 aa).

3 helical membrane passes run 8–28 (IFLF…DAVI), 46–66 (RWDG…NTFF), and 70–90 (PFST…ICFF).

It belongs to the UPF0266 family.

The protein resides in the cell membrane. This chain is UPF0266 membrane protein LMHCC_1856, found in Listeria monocytogenes serotype 4a (strain HCC23).